The following is a 963-amino-acid chain: Ubiquitin carboxyl-terminal hydrolase 4 (963 aa).

The DUSP domain maps to 11–122 (PDAETQKSEL…GQQPIVRKVV (112 aa)). The necessary for interaction with SART3 stretch occupies residues 27–216 (TLQRGAQWYL…LYQGQVLVIE (190 aa)). The Nuclear export signal signature appears at 133-141 (VEVYLLELK). The Ubiquitin-like 1 domain occupies 142 to 226 (LCENSDPTNV…PQNEDGTWPR (85 aa)). The disordered stretch occupies residues 219 to 277 (NEDGTWPRQTQQSKSSTAPSRNFTTSPKSSASPYSSVSASPIANGDSTNTSGMHSSGVS). Polar residues predominate over residues 225–243 (PRQTQQSKSSTAPSRNFTT). The tract at residues 229–295 (QQSKSSTAPS…SYNCQESPLT (67 aa)) is required for USP4 activation by providing conformational flexibility between the DUSP and catalytic domains. Low complexity predominate over residues 244–261 (SPKSSASPYSSVSASPIA). The 622-residue stretch at 302-923 (CGLGNLGNTC…AAYVLFYQRR (622 aa)) folds into the USP domain. Cysteine 311 (nucleophile) is an active-site residue. The interval 384–386 (PQF) is regulates ubiquitin dissociation. The interval 405–407 (LHE) is necessary for interaction with RBL2. At serine 445 the chain carries Phosphoserine. The necessary for interaction with RB1 and RBL2 stretch occupies residues 459–463 (LVCPE). Positions 461 and 464 each coordinate Zn(2+). The 89-residue stretch at 483–571 (LKKDRVMEIF…IFVYEVCSTS (89 aa)) folds into the Ubiquitin-like 2 domain. The segment at 485 to 775 (KDRVMEIFLV…LQPQKKKKTA (291 aa)) is interacts with DUSP and ubiquitin-like 1 domains and is required for USP4 activation. Residues 634–701 (PLPDESGSSP…ATQKKNKGRP (68 aa)) form a disordered region. Serine 675 and serine 680 each carry phosphoserine. The short motif at 767 to 772 (QPQKKK) is the Nuclear localization signal element. Zn(2+) contacts are provided by cysteine 799 and cysteine 802. The Proton acceptor role is filled by histidine 881. A disordered region spans residues 930–963 (TPSLSFPGSSDGGARPSSSQQGTGDDETYSMDTN). The span at 953–963 (GDDETYSMDTN) shows a compositional bias: acidic residues.

The protein belongs to the peptidase C19 family. USP4 subfamily. In terms of assembly, interacts with RB1 (both dephosphorylated and hypophosphorylated forms). Interacts with RBL1 and RBL2. Interacts with ADORA2A (via cytoplasmic C-terminus); the interaction is direct. Interacts with SART3; recruits USP4 to its substrate PRPF3. Post-translationally, phosphorylated at Ser-445 by PKB/AKT1 in response to EGF stimulus, promoting its ability deubiquitinate RHEB. Monoubiquitinated by TRIM21. Ubiquitination does not lead to its proteasomal degradation. Autodeubiquitinated.

Its subcellular location is the cytoplasm. It is found in the nucleus. It catalyses the reaction Thiol-dependent hydrolysis of ester, thioester, amide, peptide and isopeptide bonds formed by the C-terminal Gly of ubiquitin (a 76-residue protein attached to proteins as an intracellular targeting signal).. Its activity is regulated as follows. The completion of the deubiquitinase reaction is mediated by the DUSP and ubiquitin-like 1 domains which promotes the release of ubiquitin from the catalytic site enabling subsequent reactions to occur. Its function is as follows. Deubiquitinating enzyme that removes conjugated ubiquitin from target proteins. Deubiquitinates PDPK1. Deubiquitinates TRIM21. Deubiquitinates receptor ADORA2A which increases the amount of functional receptor at the cell surface. Deubiquitinates HAS2. Deubiquitinates RHEB in response to EGF signaling, promoting mTORC1 signaling. May regulate mRNA splicing through deubiquitination of the U4 spliceosomal protein PRPF3. This may prevent its recognition by the U5 component PRPF8 thereby destabilizing interactions within the U4/U6.U5 snRNP. May also play a role in the regulation of quality control in the ER. The chain is Ubiquitin carboxyl-terminal hydrolase 4 (USP4) from Bos taurus (Bovine).